The following is a 518-amino-acid chain: Putative succinate-semialdehyde dehydrogenase [NADP(+)] 2 (518 aa).

NADP(+)-binding positions include 157–158 (WN), 181–184 (KPDS), and 232–233 (GS). Catalysis depends on E254, which acts as the Proton acceptor. L255 provides a ligand contact to NADP(+). The active-site Nucleophile is C288. Position 386 (E386) interacts with NADP(+).

This sequence belongs to the aldehyde dehydrogenase family.

The enzyme catalyses succinate semialdehyde + NADP(+) + H2O = succinate + NADPH + 2 H(+). In terms of biological role, catalyzes the NADP(+)-dependent oxidation of succinate semialdehyde to succinate. Although it has succinate semialdehyde dehydrogenase activity, is likely to act physiologically on a different aldehyde(s). The polypeptide is Putative succinate-semialdehyde dehydrogenase [NADP(+)] 2 (gabD2) (Mycobacterium ulcerans (strain Agy99)).